The primary structure comprises 228 residues: Trichome differentiation protein GL1 (228 aa).

2 HTH myb-type domains span residues 11–63 and 64–118; these read NQEY…MNYL and SPNV…SKKL. DNA-binding regions (H-T-H motif) lie at residues 39-63 and 91-114; these read WNRI…MNYL and WSLI…NTHL.

As to quaternary structure, homodimer and heterodimer with MYB82. Interacts directly with GL3 and BHLH2. Part of a complex made of GL1, GL3 or BHLH2, and TTG1. Also interacts with BHLH2/EGL3/MYC146 and BHLH12/MYC1. Interacts with MYB82. As to expression, expressed in leaves, stems and flowers. Expressed in trichome cells and in leaf primordia.

The protein localises to the nucleus. Functionally, transcription activator, when associated with BHLH2/EGL3/MYC146 or BHLH12/MYC1. Involved in epidermal cell fate specification in leaves. Together with TTG1 and GL3, promotes trichome formation and endoreplication. Regulates the production of a signal that induces hair (trichome) precursor cells on leaf primordia to differentiate. Binds to the WER-binding sites (WBS) promoter regions and activates the transcription of target genes. The chain is Trichome differentiation protein GL1 from Arabidopsis thaliana (Mouse-ear cress).